A 37-amino-acid chain; its full sequence is Large ribosomal subunit protein bL36c (37 aa).

The protein belongs to the bacterial ribosomal protein bL36 family.

Its subcellular location is the plastid. It is found in the chloroplast. This Oenothera argillicola (Appalachian evening primrose) protein is Large ribosomal subunit protein bL36c.